A 603-amino-acid polypeptide reads, in one-letter code: Insulin-like growth factor-binding protein complex acid labile subunit (603 aa).

The N-terminal stretch at 1-23 (MALRTGSPALVVLLAFWVALGPC) is a signal peptide. The 43-residue stretch at 32 to 74 (ASADAEGPQCPVTCTCSYDDYTDELSVFCSSRNLTQLPDGIPV) folds into the LRRNT domain. 2 disulfide bridges follow: Cys41-Cys47 and Cys45-Cys60. N-linked (GlcNAc...) asparagine glycans are attached at residues Asn64, Asn85, and Asn96. LRR repeat units lie at residues 75 to 96 (STRA…AFQN), 99 to 120 (SLDF…ALLG), 123 to 144 (NLYH…LFRH), 147 to 168 (SLAS…LFRG), 171 to 192 (HLWD…VFQG), 195 to 216 (NLHE…LLCG), 219 to 240 (ELRE…VFIH), 243 to 264 (RLQK…AFLG), 267 to 288 (ALRW…TFPG), 291 to 312 (GLHV…TFKD), 315 to 336 (FLEE…TFEG), 339 to 360 (QLEV…AFFG), 363 to 384 (NVAV…VFQG), 387 to 408 (RLHS…TFAG), 411 to 432 (GLRR…SLAG), 435 to 456 (ELLE…LFQG), 459 to 480 (QLEY…VLGP), 483 to 504 (RAFW…LFSS), and 507 to 528 (RLRY…PGLE). An N-linked (GlcNAc...) asparagine glycan is attached at Asn368. N-linked (GlcNAc...) asparagine glycosylation is present at Asn515. Residues 535–603 (NPWDCSCPLK…DISETLFVHC (69 aa)) form the LRRCT domain. 3 cysteine pairs are disulfide-bonded: Cys539-Cys581, Cys541-Cys603, and Cys565-Cys570. N-linked (GlcNAc...) asparagine glycosylation is found at Asn578 and Asn586.

Forms a ternary complex with IGF1 and IGFBP3.

The protein resides in the secreted. It is found in the extracellular space. Its function is as follows. May have an important role in regulating the access of circulating IGFs to the tissues. The chain is Insulin-like growth factor-binding protein complex acid labile subunit (Igfals) from Mus musculus (Mouse).